We begin with the raw amino-acid sequence, 153 residues long: Small ribosomal subunit protein bS6 (153 aa).

The segment at 94-153 (EAHEEGPSAMMQKRDRDDRPRRDGDRPDRGDRGDRGDRGPREGGRESFGDRPRRPREDRA) is disordered.

Belongs to the bacterial ribosomal protein bS6 family.

Binds together with bS18 to 16S ribosomal RNA. In Allorhizobium ampelinum (strain ATCC BAA-846 / DSM 112012 / S4) (Agrobacterium vitis (strain S4)), this protein is Small ribosomal subunit protein bS6.